Consider the following 98-residue polypeptide: Small ribosomal subunit protein uS17 (98 aa).

The disordered stretch occupies residues 1–21 (MADQKGPKYTPAAEKPRGRRK). K96 participates in a covalent cross-link: Isoglutamyl lysine isopeptide (Lys-Gln) (interchain with Q-Cter in protein Pup).

The protein belongs to the universal ribosomal protein uS17 family. Part of the 30S ribosomal subunit.

Functionally, one of the primary rRNA binding proteins, it binds specifically to the 5'-end of 16S ribosomal RNA. The protein is Small ribosomal subunit protein uS17 (rpsQ) of Mycolicibacterium smegmatis (strain ATCC 700084 / mc(2)155) (Mycobacterium smegmatis).